The sequence spans 528 residues: O-methylsterigmatocystin oxidoreductase (528 aa).

Residue cysteine 440 coordinates heme.

This sequence belongs to the cytochrome P450 family. Heme serves as cofactor.

It carries out the reaction 8-O-methylsterigmatocystin + 2 reduced [NADPH--hemoprotein reductase] + 2 O2 = aflatoxin B1 + methanol + 2 oxidized [NADPH--hemoprotein reductase] + CO2 + H2O + 2 H(+). The catalysed reaction is 8-O-methyldihydrosterigmatocystin + 2 reduced [NADPH--hemoprotein reductase] + 2 O2 = aflatoxin B2 + methanol + 2 oxidized [NADPH--hemoprotein reductase] + CO2 + H2O + 2 H(+). The protein operates within mycotoxin biosynthesis; aflatoxin biosynthesis. Converts O-methylsterigmatocystin (OMST) to aflatoxin B1 and converts dihydro-O-methylsterigmatocystin (DHOMST) to aflatoxin B2 in the aflatoxin biosynthesis pathway. The sequence is that of O-methylsterigmatocystin oxidoreductase (ordA) from Aspergillus flavus.